We begin with the raw amino-acid sequence, 150 residues long: Transcriptional regulator MraZ (150 aa).

SpoVT-AbrB domains lie at 7–58 and 87–130; these read KEQH…EPEI and LDSV…SPEK.

The protein belongs to the MraZ family. In terms of assembly, forms oligomers.

The protein resides in the cytoplasm. It localises to the nucleoid. The protein is Transcriptional regulator MraZ of Chlorobium phaeobacteroides (strain BS1).